Reading from the N-terminus, the 104-residue chain is UPF0213 protein plu4503 (104 aa).

The GIY-YIG domain occupies 4 to 79; the sequence is NQWVLYLLKT…KQLSKQQKER (76 aa).

Belongs to the UPF0213 family.

In Photorhabdus laumondii subsp. laumondii (strain DSM 15139 / CIP 105565 / TT01) (Photorhabdus luminescens subsp. laumondii), this protein is UPF0213 protein plu4503.